A 312-amino-acid polypeptide reads, in one-letter code: Ribonuclease H2 subunit B (312 aa).

An N-acetylalanine modification is found at A2. Residues 236–256 form a disordered region; the sequence is EPSASLPNPPSKKIKLSDEPV. Position 295 is an N6-acetyllysine (K295). S296 carries the phosphoserine modification.

It belongs to the RNase H2 subunit B family. As to quaternary structure, the RNase H2 complex is a heterotrimer composed of the catalytic subunit RNASEH2A and the non-catalytic subunits RNASEH2B and RNASEH2C. As to expression, widely expressed.

It localises to the nucleus. Functionally, non catalytic subunit of RNase H2, an endonuclease that specifically degrades the RNA of RNA:DNA hybrids. Participates in DNA replication, possibly by mediating the removal of lagging-strand Okazaki fragment RNA primers during DNA replication. Mediates the excision of single ribonucleotides from DNA:RNA duplexes. The polypeptide is Ribonuclease H2 subunit B (RNASEH2B) (Homo sapiens (Human)).